We begin with the raw amino-acid sequence, 234 residues long: Ribosomal RNA small subunit methyltransferase G (234 aa).

Residues glycine 96, leucine 101, 119 to 121, 147 to 148, and arginine 161 contribute to the S-adenosyl-L-methionine site; these read DAT and VE.

The protein belongs to the methyltransferase superfamily. RNA methyltransferase RsmG family.

The protein localises to the cytoplasm. Its function is as follows. Specifically methylates the N7 position of a guanine in 16S rRNA. The sequence is that of Ribosomal RNA small subunit methyltransferase G from Chlorobium chlorochromatii (strain CaD3).